Consider the following 155-residue polypeptide: Protein archease-like (155 aa).

Ca(2+) is bound by residues Asp-26, Asp-154, and Ile-155.

The protein belongs to the archease family.

Functionally, component of the tRNA-splicing ligase complex required to facilitate the enzymatic turnover of catalytic subunit RtcB (F16A11.2). The chain is Protein archease-like from Caenorhabditis elegans.